The following is a 341-amino-acid chain: MEREKEQFRKLFIGGLSFETTEESLRNYYEQWGKLTDCVVMRDPASKRSRGFGFVTFSSMAEVDAAMAARPHSIDGRVVEPKRAVAREESGKPGAHVTVKKLFVGGIKEDTEEHHLRDYFEEYGKIDTIEIITDRQSGKKRGFGFVTFDDHDPVDKIVLQKYHTINGHNAEVRKALSRQEMQEVQSSRSGRGGNFGFGDSRGGGGNFGPGPGSNFRGGSDGYGSGRGFGDGYNGYGGGPGGGNFGGSPGYGGGRGGYGGGGPGYGNQGGGYGGGYDNYGGGNYGSGNYNDFGNYNQQPSNYGPMKSGNFGGSRNMGGPYGGGNYGPGGSGGSGGYGGRSRY.

2 consecutive RRM domains span residues 9–92 (RKLF…ESGK) and 100–179 (KKLF…LSRQ). A Glycyl lysine isopeptide (Lys-Gly) (interchain with G-Cter in SUMO2) cross-link involves residue Lys10. At Ser17 the chain carries Phosphoserine. Arg26 bears the Omega-N-methylarginine mark. Ser73 carries the phosphoserine modification. Lys92 is subject to N6,N6-dimethyllysine; alternate. A Glycyl lysine isopeptide (Lys-Gly) (interchain with G-Cter in SUMO2); alternate cross-link involves residue Lys92. Glycyl lysine isopeptide (Lys-Gly) (interchain with G-Cter in SUMO2) cross-links involve residues Lys100, Lys108, and Lys125. Thr128 carries the post-translational modification Phosphothreonine. Residue Ser137 is modified to Phosphoserine. Lys140 is covalently cross-linked (Glycyl lysine isopeptide (Lys-Gly) (interchain with G-Cter in SUMO2)). Phosphothreonine is present on Thr147. Glycyl lysine isopeptide (Lys-Gly) (interchain with G-Cter in SUMO2); alternate cross-links involve residues Lys156 and Lys161. 2 positions are modified to N6-acetyllysine; alternate: Lys156 and Lys161. At Thr164 the chain carries Phosphothreonine. A Glycyl lysine isopeptide (Lys-Gly) (interchain with G-Cter in SUMO2) cross-link involves residue Lys174. Ser177 and Ser189 each carry phosphoserine. Residues 181-341 (MQEVQSSRSG…SGGYGGRSRY (161 aa)) are disordered. Over residues 190–211 (GRGGNFGFGDSRGGGGNFGPGP) the composition is skewed to gly residues. Arg191 carries the post-translational modification Asymmetric dimethylarginine; alternate. Arg191 carries the dimethylated arginine; alternate modification. Arg191 carries the post-translational modification Omega-N-methylarginine; alternate. Ser200 carries the post-translational modification Phosphoserine. At Arg201 the chain carries Asymmetric dimethylarginine; alternate. A Dimethylated arginine; alternate modification is found at Arg201. Arg201 is subject to Omega-N-methylarginine; alternate. At Ser213 the chain carries Phosphoserine. Arg216 is subject to Omega-N-methylarginine. 2 positions are modified to phosphoserine: Ser219 and Ser224. Omega-N-methylarginine is present on Arg226. Position 247 is a phosphoserine (Ser247). Asymmetric dimethylarginine; alternate is present on Arg254. Arg254 bears the Omega-N-methylarginine; alternate mark. A nuclear targeting sequence region spans residues 296 to 335 (QQPSNYGPMKSGNFGGSRNMGGPYGGGNYGPGGSGGSGGY). Residues 308 to 341 (NFGGSRNMGGPYGGGNYGPGGSGGSGGYGGRSRY) are compositionally biased toward gly residues. A Phosphoserine modification is found at Ser312. Position 313 is an omega-N-methylarginine (Arg313). The residue at position 319 (Tyr319) is a Phosphotyrosine. 2 positions are modified to phosphoserine: Ser329 and Ser332. Position 335 is a phosphotyrosine (Tyr335). Arg338 carries the post-translational modification Omega-N-methylarginine.

In terms of assembly, identified in the spliceosome C complex. Identified in a IGF2BP1-dependent mRNP granule complex containing untranslated mRNAs. Interacts with IGF2BP1. Interacts with C9orf72. Interacts with DGCR8. Interacts with TARDBP. Interacts with CKAP5. Interacts with PPIA/CYPA. Interacts (via C-terminus) with FAM76B; the interaction results in retention of HNRNPA2B1 in the nucleus and inhibition of the NF-kappa-B-mediated inflammatory pathway. Interacts with NF-kappa-B inhibitors NFKBIA and NFKBIE; the interaction may be mediated by the RRM2 domain of HNRNPA2B1, and HNRNPA2B1 may interact simultaneously with FAM76B and either NFKBIA or NFKBIE to form a complex. In terms of processing, sumoylated in exosomes, promoting miRNAs-binding. Post-translationally, asymmetric dimethylation at Arg-254 constitutes the major methylation site. According to a report, methylation affects subcellular location and promotes nuclear localization. According to another report, methylation at Arg-254 does not influence nucleocytoplasmic shuttling.

The protein resides in the nucleus. It localises to the nucleoplasm. Its subcellular location is the cytoplasmic granule. The protein localises to the secreted. It is found in the extracellular exosome. Its function is as follows. Heterogeneous nuclear ribonucleoprotein (hnRNP) that associates with nascent pre-mRNAs, packaging them into hnRNP particles. The hnRNP particle arrangement on nascent hnRNA is non-random and sequence-dependent and serves to condense and stabilize the transcripts and minimize tangling and knotting. Packaging plays a role in various processes such as transcription, pre-mRNA processing, RNA nuclear export, subcellular location, mRNA translation and stability of mature mRNAs. Forms hnRNP particles with at least 20 other different hnRNP and heterogeneous nuclear RNA in the nucleus. Involved in transport of specific mRNAs to the cytoplasm in oligodendrocytes and neurons: acts by specifically recognizing and binding the A2RE (21 nucleotide hnRNP A2 response element) or the A2RE11 (derivative 11 nucleotide oligonucleotide) sequence motifs present on some mRNAs, and promotes their transport to the cytoplasm. Specifically binds single-stranded telomeric DNA sequences, protecting telomeric DNA repeat against endonuclease digestion. Also binds other RNA molecules, such as primary miRNA (pri-miRNAs): acts as a nuclear 'reader' of the N6-methyladenosine (m6A) mark by specifically recognizing and binding a subset of nuclear m6A-containing pri-miRNAs. Binding to m6A-containing pri-miRNAs promotes pri-miRNA processing by enhancing binding of DGCR8 to pri-miRNA transcripts. Involved in miRNA sorting into exosomes following sumoylation, possibly by binding (m6A)-containing pre-miRNAs. Acts as a regulator of efficiency of mRNA splicing, possibly by binding to m6A-containing pre-mRNAs. Plays a role in the splicing of pyruvate kinase PKM by binding repressively to sequences flanking PKM exon 9, inhibiting exon 9 inclusion and resulting in exon 10 inclusion and production of the PKM M2 isoform. The chain is Heterogeneous nuclear ribonucleoproteins A2/B1 (HNRNPA2B1) from Bos taurus (Bovine).